A 343-amino-acid polypeptide reads, in one-letter code: NADH dehydrogenase [ubiquinone] 1 alpha subcomplex subunit 10, mitochondrial (343 aa).

The transit peptide at 1–23 (MALRLLRLVPPRVGGIHTSVQFK) directs the protein to the mitochondrion. An N6-acetyllysine; alternate modification is found at Lys-110. Residue Lys-110 is modified to N6-succinyllysine; alternate. Ser-238 is subject to Phosphoserine; by PINK1.

It belongs to the complex I NDUFA10 subunit family. As to quaternary structure, complex I is composed of 45 different subunits. This a component of the hydrophobic protein fraction. The cofactor is FAD. Phosphorylation at Ser-238 by PINK1 is required for the binding and/or reduction of the complex I substrate ubiquinone.

It localises to the mitochondrion matrix. Its function is as follows. Accessory subunit of the mitochondrial membrane respiratory chain NADH dehydrogenase (Complex I), that is believed not to be involved in catalysis. Complex I functions in the transfer of electrons from NADH to the respiratory chain. The immediate electron acceptor for the enzyme is believed to be ubiquinone. In Bos taurus (Bovine), this protein is NADH dehydrogenase [ubiquinone] 1 alpha subcomplex subunit 10, mitochondrial (NDUFA10).